The following is a 469-amino-acid chain: 3-isopropylmalate dehydratase large subunit (469 aa).

[4Fe-4S] cluster contacts are provided by C347, C407, and C410. Positions 424–441 are enriched in polar residues; sequence SASSSNRNFKGRQGSPSG. A disordered region spans residues 424-443; that stretch reads SASSSNRNFKGRQGSPSGRT.

This sequence belongs to the aconitase/IPM isomerase family. LeuC type 1 subfamily. Heterodimer of LeuC and LeuD. [4Fe-4S] cluster is required as a cofactor.

It carries out the reaction (2R,3S)-3-isopropylmalate = (2S)-2-isopropylmalate. The protein operates within amino-acid biosynthesis; L-leucine biosynthesis; L-leucine from 3-methyl-2-oxobutanoate: step 2/4. In terms of biological role, catalyzes the isomerization between 2-isopropylmalate and 3-isopropylmalate, via the formation of 2-isopropylmaleate. This is 3-isopropylmalate dehydratase large subunit from Prochlorococcus marinus (strain MIT 9312).